We begin with the raw amino-acid sequence, 292 residues long: Medium chain reductase/dehydrogenase ucsI (292 aa).

Cys-43 provides a ligand contact to Zn(2+). Tyr-49 contacts substrate. His-65 and Glu-66 together coordinate Zn(2+). Residues 184–189 (GCGPVG), Asp-208, Arg-213, and 276–278 (IGA) each bind NAD(+).

The protein belongs to the zinc-containing alcohol dehydrogenase family. Zn(2+) is required as a cofactor.

The protein operates within mycotoxin biosynthesis. Functionally, medium chain reductase/dehydrogenase; part of the gene cluster that mediates the biosynthesis of UCS1025A, a member of the pyrrolizidinone family that acts as a strong telomerase inhibitor and displays potent antibacterial and antitumor properties. These compounds share a hemiaminal-containing pyrrolizidinone core fused with a gamma-lactone, giving a furopyrrolizidine that is connected to a decalin fragment. The polyketide synthase module (PKS) of the PKS-NRPS ucsA is responsible for the synthesis of the polyketide backbone via the condensation of an acetyl-CoA starter unit with 6 malonyl-CoA units. The downstream nonribosomal peptide synthetase (NRPS) module then amidates the carboxyl end of the polyketide with a 2S,3S-methylproline derived from L-isoleucine by the 2-oxoglutarate-dependent dioxygenase ucsF which converts L-isoleucine to (4S,5S)-4-methylpyrroline-5-carboxylate that is further converted to 2S,3S-methylproline by the pyrroline-5-carboxylate reductase ucsG. Reductive release of the completed aminoacyl polyketide from the assembly line can form the 3-pyrrolin-2-one structure via an intramolecular Knoevenagel reaction. Because ucsA lacks a designated enoylreductase (ER) domain, the required activity is provided the enoyl reductase ucsL. This keto acyclic precursor is the substrate of the Diels-Alderase ucsH, that catalyzes the Diels-Alder cycloaddition. Oxidation of the 3S-methyl group to a carboxylate by the cytochrome P450 monooxygenase ucsK allows an oxa-Michael cyclization that might involve the reductase/dehydrogenase ucsI and which furnishes the furopyrrolizidine. The oxidase ucsJ likely plays a critical role in stereoselective reduction of the C5-C6 double bond to afford the required R-configured carboxylate group. Further enolization and oxidation at C5 by an unidentified enzyme affords the last intermediate that can undergo oxa-Michael cyclization to yield UCS1025A. This chain is Medium chain reductase/dehydrogenase ucsI, found in Acremonium sp.